A 465-amino-acid chain; its full sequence is ATP synthase subunit beta (465 aa).

152 to 159 (GGAGVGKT) is a binding site for ATP.

Belongs to the ATPase alpha/beta chains family. In terms of assembly, F-type ATPases have 2 components, CF(1) - the catalytic core - and CF(0) - the membrane proton channel. CF(1) has five subunits: alpha(3), beta(3), gamma(1), delta(1), epsilon(1). CF(0) has three main subunits: a(1), b(2) and c(9-12). The alpha and beta chains form an alternating ring which encloses part of the gamma chain. CF(1) is attached to CF(0) by a central stalk formed by the gamma and epsilon chains, while a peripheral stalk is formed by the delta and b chains.

It is found in the cell membrane. The catalysed reaction is ATP + H2O + 4 H(+)(in) = ADP + phosphate + 5 H(+)(out). Functionally, produces ATP from ADP in the presence of a proton gradient across the membrane. The catalytic sites are hosted primarily by the beta subunits. The chain is ATP synthase subunit beta from Ruminiclostridium cellulolyticum (strain ATCC 35319 / DSM 5812 / JCM 6584 / H10) (Clostridium cellulolyticum).